Consider the following 274-residue polypeptide: Orotidine 5'-phosphate decarboxylase (274 aa).

Lysine 95 acts as the Proton donor in catalysis.

Belongs to the OMP decarboxylase family. Type 2 subfamily.

The enzyme catalyses orotidine 5'-phosphate + H(+) = UMP + CO2. It functions in the pathway pyrimidine metabolism; UMP biosynthesis via de novo pathway; UMP from orotate: step 2/2. The polypeptide is Orotidine 5'-phosphate decarboxylase (Paracidovorax citrulli (strain AAC00-1) (Acidovorax citrulli)).